Reading from the N-terminus, the 107-residue chain is Circadian clock oscillator protein KaiB (107 aa).

It belongs to the KaiB family. May undergo a major conformational rearrangment; in the free state forms homooligomers. When bound to KaiC switches to a monomeric thioredoxin-fold (KaiB(fs)). The active oscillator complex is probably KaiC(6):KaiB(6).

Functionally, component of the KaiBC clock protein complex, which constitutes the main circadian regulator in cyanobacteria; it may modify the ATPase activity of KaiC. In terms of biological role, does not stimulate dephosphorylation of endogenous KaiC, although it does stimulate dephosphorylation of KiaC from S.elongatus strain PCC 7942. Reduces the ATPase activity of KaiC by about half in vitro, which may be its function in vivo. Its function is as follows. May be a metamorphic protein which reversibly switches between an inactive tetrameric fold and a rare, thioredoxin-like monomeric fold (KaiB(fs)). KaiB(fs) binds phospho-KaiC, and perhaps clock output effectors. This chain is Circadian clock oscillator protein KaiB, found in Prochlorococcus marinus subsp. pastoris (strain CCMP1986 / NIES-2087 / MED4).